The sequence spans 329 residues: NAD(+) hydrolase TcpA (329 aa).

The 130-residue stretch at V5 to R134 folds into the MPN domain. Residues F192–L324 form the TIR domain. NAD(+) is bound by residues A201–H202 and S231. E267 is an active-site residue.

It carries out the reaction NAD(+) + H2O = ADP-D-ribose + nicotinamide + H(+). In terms of biological role, NAD(+) hydrolase (NADase) that catalyzes cleavage of NAD(+) into ADP-D-ribose (ADPR) and nicotinamide. The polypeptide is NAD(+) hydrolase TcpA (Theionarchaea archaeon (strain DG-70-1)).